The primary structure comprises 198 residues: NAD(P)H dehydrogenase (quinone) (198 aa).

Residues 4 to 189 (VLVLYYSMYG…ALARYQGRHV (186 aa)) form the Flavodoxin-like domain. FMN contacts are provided by residues 10 to 15 (SMYGHV) and 78 to 80 (TRF). Residue Y12 coordinates NAD(+). W98 is a substrate binding site. Residues 113-118 (STGTGG) and H133 each bind FMN.

It belongs to the WrbA family. Requires FMN as cofactor.

It carries out the reaction a quinone + NADH + H(+) = a quinol + NAD(+). The enzyme catalyses a quinone + NADPH + H(+) = a quinol + NADP(+). The chain is NAD(P)H dehydrogenase (quinone) from Halorhodospira halophila (strain DSM 244 / SL1) (Ectothiorhodospira halophila (strain DSM 244 / SL1)).